A 348-amino-acid chain; its full sequence is N-acetyl-gamma-glutamyl-phosphate reductase (348 aa).

Residue Cys-150 is part of the active site.

It belongs to the NAGSA dehydrogenase family. Type 1 subfamily.

The protein resides in the cytoplasm. The enzyme catalyses N-acetyl-L-glutamate 5-semialdehyde + phosphate + NADP(+) = N-acetyl-L-glutamyl 5-phosphate + NADPH + H(+). It functions in the pathway amino-acid biosynthesis; L-arginine biosynthesis; N(2)-acetyl-L-ornithine from L-glutamate: step 3/4. Its function is as follows. Catalyzes the NADPH-dependent reduction of N-acetyl-5-glutamyl phosphate to yield N-acetyl-L-glutamate 5-semialdehyde. This chain is N-acetyl-gamma-glutamyl-phosphate reductase, found in Symbiobacterium thermophilum (strain DSM 24528 / JCM 14929 / IAM 14863 / T).